The following is a 151-amino-acid chain: Deoxyuridine 5'-triphosphate nucleotidohydrolase (151 aa).

Substrate is bound by residues 70–72 (RSG), asparagine 83, 87–89 (LID), and methionine 97.

Belongs to the dUTPase family. The cofactor is Mg(2+).

The enzyme catalyses dUTP + H2O = dUMP + diphosphate + H(+). It functions in the pathway pyrimidine metabolism; dUMP biosynthesis; dUMP from dCTP (dUTP route): step 2/2. This enzyme is involved in nucleotide metabolism: it produces dUMP, the immediate precursor of thymidine nucleotides and it decreases the intracellular concentration of dUTP so that uracil cannot be incorporated into DNA. The chain is Deoxyuridine 5'-triphosphate nucleotidohydrolase from Pseudomonas putida (strain W619).